A 473-amino-acid polypeptide reads, in one-letter code: Ribulose bisphosphate carboxylase large chain (473 aa).

The propeptide occupies Met-1–Ser-2. N-acetylproline is present on Pro-3. Lys-14 bears the N6,N6,N6-trimethyllysine mark. Substrate-binding residues include Asn-123 and Thr-173. The active-site Proton acceptor is the Lys-175. A substrate-binding site is contributed by Lys-177. Positions 201, 203, and 204 each coordinate Mg(2+). Lys-201 carries the post-translational modification N6-carboxylysine. His-294 (proton acceptor) is an active-site residue. Substrate contacts are provided by Arg-295, His-327, and Ser-379.

The protein belongs to the RuBisCO large chain family. Type I subfamily. In terms of assembly, heterohexadecamer of 8 large chains and 8 small chains; disulfide-linked. The disulfide link is formed within the large subunit homodimers. It depends on Mg(2+) as a cofactor. Post-translationally, the disulfide bond which can form in the large chain dimeric partners within the hexadecamer appears to be associated with oxidative stress and protein turnover.

Its subcellular location is the plastid. It is found in the chloroplast. The enzyme catalyses 2 (2R)-3-phosphoglycerate + 2 H(+) = D-ribulose 1,5-bisphosphate + CO2 + H2O. The catalysed reaction is D-ribulose 1,5-bisphosphate + O2 = 2-phosphoglycolate + (2R)-3-phosphoglycerate + 2 H(+). RuBisCO catalyzes two reactions: the carboxylation of D-ribulose 1,5-bisphosphate, the primary event in carbon dioxide fixation, as well as the oxidative fragmentation of the pentose substrate in the photorespiration process. Both reactions occur simultaneously and in competition at the same active site. This chain is Ribulose bisphosphate carboxylase large chain, found in Cajanus cajan (Pigeon pea).